Consider the following 652-residue polypeptide: Nitrate reductase-like protein NarX (652 aa).

A nitrate reductase alpha subunit region spans residues 1-251 (MTVTPRTGSR…FGDQTDVPES (251 aa)). The 65-residue stretch at 53–117 (DKVVRSTHGV…AFSWYTYSPT (65 aa)) folds into the 4Fe-4S Mo/W bis-MGD-type domain. [4Fe-4S] cluster contacts are provided by His60, Cys64, Cys68, and Cys103. Residue Asp233 participates in Mo-bis(molybdopterin guanine dinucleotide) binding. Residues 258-415 (VWQCASVLLT…TVAAVCRTGD (158 aa)) are nitrate reductase delta subunit. 5 helical membrane passes run 416–436 (MMGE…VAVG), 466–486 (PMFH…LVIP), 504–524 (AVVL…LLIY), 545–565 (LVLV…SGVV), and 595–615 (APLY…LWPF). The segment at 416–652 (MMGELFWTVV…VLTRPRRRGW (237 aa)) is nitrate reductase gamma subunit. Heme b is bound by residues His469 and His479. Residues His602 and His620 each coordinate heme b.

In the N-terminal section; belongs to the nitrate reductase alpha subunit family. This sequence in the central section; belongs to the NarJ/NarW family. The protein in the C-terminal section; belongs to the nitrate reductase gamma subunit family. It depends on [4Fe-4S] cluster as a cofactor. Mo-bis(molybdopterin guanine dinucleotide) is required as a cofactor. Heme b serves as cofactor.

It is found in the cell membrane. Its function is as follows. Does not seem to have nitrate reductase activity. The protein is Nitrate reductase-like protein NarX (narX) of Mycobacterium tuberculosis (strain CDC 1551 / Oshkosh).